The sequence spans 98 residues: Co-chaperonin GroES 1 (98 aa).

Belongs to the GroES chaperonin family. Heptamer of 7 subunits arranged in a ring. Interacts with the chaperonin GroEL.

The protein localises to the cytoplasm. Together with the chaperonin GroEL, plays an essential role in assisting protein folding. The GroEL-GroES system forms a nano-cage that allows encapsulation of the non-native substrate proteins and provides a physical environment optimized to promote and accelerate protein folding. GroES binds to the apical surface of the GroEL ring, thereby capping the opening of the GroEL channel. This Rhodopseudomonas palustris (strain ATCC BAA-98 / CGA009) protein is Co-chaperonin GroES 1.